The primary structure comprises 82 residues: Acyl carrier protein (82 aa).

A Carrier domain is found at 4 to 79 (PEMEARLKQI…DALNYIEQKL (76 aa)). The residue at position 39 (S39) is an O-(pantetheine 4'-phosphoryl)serine.

Belongs to the acyl carrier protein (ACP) family. 4'-phosphopantetheine is transferred from CoA to a specific serine of apo-ACP by AcpS. This modification is essential for activity because fatty acids are bound in thioester linkage to the sulfhydryl of the prosthetic group.

It is found in the cytoplasm. Its pathway is lipid metabolism; fatty acid biosynthesis. Its function is as follows. Carrier of the growing fatty acid chain in fatty acid biosynthesis. The chain is Acyl carrier protein from Roseiflexus castenholzii (strain DSM 13941 / HLO8).